We begin with the raw amino-acid sequence, 243 residues long: Pyridoxine 5'-phosphate synthase (243 aa).

Asn-9 provides a ligand contact to 3-amino-2-oxopropyl phosphate. 11 to 12 (DH) lines the 1-deoxy-D-xylulose 5-phosphate pocket. A 3-amino-2-oxopropyl phosphate-binding site is contributed by Arg-20. The active-site Proton acceptor is the His-45. 1-deoxy-D-xylulose 5-phosphate-binding residues include Arg-47 and His-52. Glu-72 (proton acceptor) is an active-site residue. Thr-102 is a 1-deoxy-D-xylulose 5-phosphate binding site. His-193 (proton donor) is an active-site residue. 3-amino-2-oxopropyl phosphate is bound by residues Gly-194 and 215 to 216 (GH).

Belongs to the PNP synthase family. As to quaternary structure, homooctamer; tetramer of dimers.

It is found in the cytoplasm. The catalysed reaction is 3-amino-2-oxopropyl phosphate + 1-deoxy-D-xylulose 5-phosphate = pyridoxine 5'-phosphate + phosphate + 2 H2O + H(+). It participates in cofactor biosynthesis; pyridoxine 5'-phosphate biosynthesis; pyridoxine 5'-phosphate from D-erythrose 4-phosphate: step 5/5. Functionally, catalyzes the complicated ring closure reaction between the two acyclic compounds 1-deoxy-D-xylulose-5-phosphate (DXP) and 3-amino-2-oxopropyl phosphate (1-amino-acetone-3-phosphate or AAP) to form pyridoxine 5'-phosphate (PNP) and inorganic phosphate. The protein is Pyridoxine 5'-phosphate synthase of Photobacterium profundum (strain SS9).